The primary structure comprises 173 residues: NADH-ubiquinone oxidoreductase chain 6 (173 aa).

The next 5 helical transmembrane spans lie at 1–21, 27–47, 48–68, 87–107, and 139–159; these read MTYF…AVAS, YGVV…MSLG, MSFV…VVFV, VVGY…VGGL, and CGVG…FVVL.

Belongs to the complex I subunit 6 family.

It localises to the mitochondrion membrane. It catalyses the reaction a ubiquinone + NADH + 5 H(+)(in) = a ubiquinol + NAD(+) + 4 H(+)(out). Its function is as follows. Core subunit of the mitochondrial membrane respiratory chain NADH dehydrogenase (Complex I) that is believed to belong to the minimal assembly required for catalysis. Complex I functions in the transfer of electrons from NADH to the respiratory chain. The immediate electron acceptor for the enzyme is believed to be ubiquinone. The sequence is that of NADH-ubiquinone oxidoreductase chain 6 (MT-ND6) from Synthliboramphus antiquus (Ancient murrelet).